The following is a 117-amino-acid chain: 5-hydroxyisourate hydrolase (117 aa).

The substrate site is built by H7, R45, and Y114.

The protein belongs to the transthyretin family. 5-hydroxyisourate hydrolase subfamily. In terms of assembly, homotetramer.

The catalysed reaction is 5-hydroxyisourate + H2O = 5-hydroxy-2-oxo-4-ureido-2,5-dihydro-1H-imidazole-5-carboxylate + H(+). In terms of biological role, catalyzes the hydrolysis of 5-hydroxyisourate (HIU) to 2-oxo-4-hydroxy-4-carboxy-5-ureidoimidazoline (OHCU). The sequence is that of 5-hydroxyisourate hydrolase from Ralstonia nicotianae (strain ATCC BAA-1114 / GMI1000) (Ralstonia solanacearum).